The sequence spans 176 residues: NAD(P)H-quinone oxidoreductase subunit 6, chloroplastic (176 aa).

5 consecutive transmembrane segments (helical) span residues 10-30 (ILLV…VLLT), 32-52 (PIYS…FHIP), 61-81 (AQLL…VMFM), 92-112 (LWTV…FSLI), and 152-172 (FYLP…GAIS).

Belongs to the complex I subunit 6 family. NDH is composed of at least 16 different subunits, 5 of which are encoded in the nucleus.

It localises to the plastid. The protein resides in the chloroplast thylakoid membrane. The catalysed reaction is a plastoquinone + NADH + (n+1) H(+)(in) = a plastoquinol + NAD(+) + n H(+)(out). It carries out the reaction a plastoquinone + NADPH + (n+1) H(+)(in) = a plastoquinol + NADP(+) + n H(+)(out). NDH shuttles electrons from NAD(P)H:plastoquinone, via FMN and iron-sulfur (Fe-S) centers, to quinones in the photosynthetic chain and possibly in a chloroplast respiratory chain. The immediate electron acceptor for the enzyme in this species is believed to be plastoquinone. Couples the redox reaction to proton translocation, and thus conserves the redox energy in a proton gradient. The protein is NAD(P)H-quinone oxidoreductase subunit 6, chloroplastic (ndhG) of Liriodendron tulipifera (Tuliptree).